Here is a 439-residue protein sequence, read N- to C-terminus: GTPase Der (439 aa).

EngA-type G domains lie at 2–168 (ATVL…EEKG) and 181–357 (IKIA…SSYT). Residues 8-15 (GKPNVGKS), 55-59 (DTCGV), 118-121 (NKTE), 187-194 (GRPNVGKS), 234-238 (DTAGL), and 300-303 (NKWD) each bind GTP. Residues 358–439 (TKVPSSALNS…PIFLKFKKSR (82 aa)) enclose the KH-like domain.

This sequence belongs to the TRAFAC class TrmE-Era-EngA-EngB-Septin-like GTPase superfamily. EngA (Der) GTPase family. As to quaternary structure, associates with the 50S ribosomal subunit.

In terms of biological role, GTPase that plays an essential role in the late steps of ribosome biogenesis. In Thermotoga neapolitana (strain ATCC 49049 / DSM 4359 / NBRC 107923 / NS-E), this protein is GTPase Der.